The following is a 1791-amino-acid chain: Sodium channel protein type 11 subunit alpha (1791 aa).

At 1 to 126 (MDDRCYPVIF…SIRSLAIRVS (126 aa)) the chain is on the cytoplasmic side. The I repeat unit spans residues 115–408 (FNSIRSLAIR…VTMAYEEQNK (294 aa)). The chain crosses the membrane as a helical span at residues 127-148 (VHSLFSMFIIGTVIINCVFMAT). At 149 to 156 (GPAKNSNS) the chain is on the extracellular side. Residues 157–180 (NNTDIAECVFTGIYIFEALIKILA) traverse the membrane as a helical segment. Residues 181–192 (RGFILDEFSFLR) lie on the Cytoplasmic side of the membrane. The helical transmembrane segment at 193–212 (DPWNWLDSIVIGIAIVSYIP) threads the bilayer. Residues 213-219 (GITIKLL) are Extracellular-facing. A helical; Voltage-sensor membrane pass occupies residues 220–239 (PLRTFRVFRALKAISVVSRL). The Cytoplasmic portion of the chain corresponds to 240-255 (KVIVGALLRSVKKLVN). Residues 256 to 269 (VIILTFFCLSIFAL) traverse the membrane as a helical segment. The Extracellular portion of the chain corresponds to 270 to 344 (VGQQLFMGSL…PDYNYTNFDN (75 aa)). Cys-283 and Cys-322 form a disulfide bridge. N-linked (GlcNAc...) asparagine glycosylation is found at Asn-290 and Asn-338. The pore-forming intramembrane region spans 345-369 (FGWSFLAMFRLMTQDSWEKLYQQTL). At 370 to 376 (RTTGLYS) the chain is on the extracellular side. The helical transmembrane segment at 377–402 (VFFFIVVIFLGSFYLINLTLAVVTMA) threads the bilayer. Residues 403-572 (YEEQNKNVAA…WLCVKKVLRT (170 aa)) lie on the Cytoplasmic side of the membrane. One copy of the II repeat lies at 559 to 833 (CCPQWLCVKK…EGEARKTKVQ (275 aa)). The chain crosses the membrane as a helical span at residues 573–596 (VMTDPFTELAITICIIINTVFLAM). At 597 to 607 (EHHKMEASFEK) the chain is on the extracellular side. A helical transmembrane segment spans residues 608 to 631 (MLNIGNLVFTSIFIAEMCLKIIAL). Residues 632 to 639 (DPYHYFRR) lie on the Cytoplasmic side of the membrane. A helical transmembrane segment spans residues 640–659 (GWNIFDSIVALLSFADVMNC). Residues 660–667 (VLQKRSWP) are Extracellular-facing. A helical; Voltage-sensor transmembrane segment spans residues 668 to 687 (FLRSFRVLRVFKLAKSWPTL). At 688–702 (NTLIKIIGNSVGALG) the chain is on the cytoplasmic side. The helical transmembrane segment at 703-725 (SLTVVLVIVIFIFSVVGMQLFGR) threads the bilayer. Topologically, residues 726 to 753 (SFNSQKSPKLCNPTGPTVSCLRHWHMGD) are extracellular. The segment at residues 754 to 774 (FWHSFLVVFRILCGEWIENMW) is an intramembrane region (pore-forming). Topologically, residues 775–785 (ECMQEANASSS) are extracellular. Cys-776 and Cys-787 are joined by a disulfide. Asn-781 is a glycosylation site (N-linked (GlcNAc...) asparagine). A helical transmembrane segment spans residues 786–811 (LCVIVFILITVIGKLVVLNLFIALLL). At 812–1051 (NSFSNEERNG…WWNLRKTCYQ (240 aa)) the chain is on the cytoplasmic side. Residues 1044 to 1339 (NLRKTCYQIV…KKYYNAMKKL (296 aa)) form an III repeat. The chain crosses the membrane as a helical span at residues 1052-1074 (IVKHSWFESFIIFVILLSSGALI). The Extracellular portion of the chain corresponds to 1075-1088 (FEDVHLENQPKIQE). Residues 1089–1114 (LLNCTDIIFTHIFILEMVLKWVAFGF) traverse the membrane as a helical segment. Residues 1115–1120 (GKYFTS) are Cytoplasmic-facing. Residues 1121 to 1138 (AWCCLDFIIVIVSVTTLI) form a helical membrane-spanning segment. Position 1139 (Asn-1139) is a topological domain, extracellular. A helical; Voltage-sensor transmembrane segment spans residues 1140–1161 (LMELKSFRTLRALRPLRALSQF). The Cytoplasmic portion of the chain corresponds to 1162–1180 (EGMKVVVNALIGAIPAILN). The chain crosses the membrane as a helical span at residues 1181–1202 (VLLVCLIFWLVFCILGVYFFSG). Topologically, residues 1203-1243 (KFGKCINGTDSVINYTIITNKSQCESGNFSWINQKVNFDNV) are extracellular. N-linked (GlcNAc...) asparagine glycans are attached at residues Asn-1209, Asn-1216, Asn-1222, and Asn-1230. The segment at residues 1244–1265 (GNAYLALLQVATFKGWMDIIYA) is an intramembrane region (pore-forming). Residues 1266–1281 (AVDSTEKEQQPEFESN) lie on the Extracellular side of the membrane. A helical transmembrane segment spans residues 1282–1308 (SLGYIYFVVFIIFGSFFTLNLFIGVII). Topologically, residues 1309–1361 (DNFNQQQKKLGGQDIFMTEEQKKYYNAMKKLGSKKPQKPIPRPLNKCQGLVFD) are cytoplasmic. Residues 1348–1639 (IPRPLNKCQG…WEKFDPEATQ (292 aa)) form an IV repeat. A helical membrane pass occupies residues 1362–1385 (IVTSQIFDIIIISLIILNMISMMA). The Extracellular portion of the chain corresponds to 1386-1396 (ESYNQPKAMKS). The chain crosses the membrane as a helical span at residues 1397-1420 (ILDHLNWVFVVIFTLECLIKIFAL). At 1421–1426 (RQYYFT) the chain is on the cytoplasmic side. Residues 1427-1450 (NGWNLFDCVVVLLSIVSTMISTLE) form a helical membrane-spanning segment. Residues 1451 to 1461 (NQEHIPFPPTL) are Extracellular-facing. A helical; Voltage-sensor transmembrane segment spans residues 1462–1484 (FRIVRLARIGRILRLVRAARGIR). The Cytoplasmic portion of the chain corresponds to 1485 to 1499 (TLLFALMMSLPSLFN). Residues 1500–1522 (IGLLLFLIMFIYAILGMNWFSKV) traverse the membrane as a helical segment. The Extracellular segment spans residues 1523–1536 (NPESGIDDIFNFKT). Positions 1537–1559 (FASSMLCLFQISTSAGWDSLLSP) form an intramembrane region, pore-forming. Over 1560-1579 (MLRSKESCNSSSENCHLPGI) the chain is Extracellular. N-linked (GlcNAc...) asparagine glycosylation is present at Asn-1568. The chain crosses the membrane as a helical span at residues 1580–1604 (ATSYFVSYIIISFLIVVNMYIAVIL). Topologically, residues 1605 to 1791 (ENFNTATEES…GVAKGKVHCD (187 aa)) are cytoplasmic.

This sequence belongs to the sodium channel (TC 1.A.1.10) family. Nav1.9/SCN11A subfamily. In terms of assembly, the voltage-resistant sodium channel consists of an ion conducting pore forming alpha-subunit regulated by one or more auxiliary subunits SCN1B, SCN2B and SCN3B. Expressed in the dorsal root ganglia and trigeminal ganglia, olfactory bulb, hippocampus, cerebellar cortex, spinal cord, spleen, small intestine and placenta.

Its subcellular location is the cell membrane. The catalysed reaction is Na(+)(in) = Na(+)(out). Activity is not sensitive to inhibition by tetrodotoxin. Functionally, sodium channel mediating the voltage-dependent sodium ion permeability of excitable membranes. Assuming opened or closed conformations in response to the voltage difference across the membrane, the protein forms a sodium-selective channel through which sodium ions may pass in accordance with their electrochemical gradient. Involved in membrane depolarization during action potential in nociceptors which function as key relay stations for the electrical transmission of pain signals from the periphery to the central nervous system. Also involved in rapid BDNF-evoked neuronal depolarization. This Homo sapiens (Human) protein is Sodium channel protein type 11 subunit alpha.